A 513-amino-acid chain; its full sequence is ATP synthase subunit alpha (513 aa).

Position 169-176 (169-176 (GDRQTGKT)) interacts with ATP.

This sequence belongs to the ATPase alpha/beta chains family. As to quaternary structure, F-type ATPases have 2 components, CF(1) - the catalytic core - and CF(0) - the membrane proton channel. CF(1) has five subunits: alpha(3), beta(3), gamma(1), delta(1), epsilon(1). CF(0) has three main subunits: a(1), b(2) and c(9-12). The alpha and beta chains form an alternating ring which encloses part of the gamma chain. CF(1) is attached to CF(0) by a central stalk formed by the gamma and epsilon chains, while a peripheral stalk is formed by the delta and b chains.

The protein resides in the cell inner membrane. It carries out the reaction ATP + H2O + 4 H(+)(in) = ADP + phosphate + 5 H(+)(out). Produces ATP from ADP in the presence of a proton gradient across the membrane. The alpha chain is a regulatory subunit. The polypeptide is ATP synthase subunit alpha (Nitrosomonas europaea (strain ATCC 19718 / CIP 103999 / KCTC 2705 / NBRC 14298)).